Here is a 198-residue protein sequence, read N- to C-terminus: Protein XA-1 (198 aa).

Residues 1–18 (MFFYVLLLALMAQGWSLP) form the signal peptide. The tract at residues 17–198 (LPQGKTGEDS…KHGQEQGKKH (182 aa)) is disordered. Residues 29–44 (FRPPSPPMGPSLPPPV) are compositionally biased toward pro residues. Residues 46 to 59 (HDLHRPSGHPEEFR) are compositionally biased toward basic and acidic residues. A compositionally biased stretch (basic residues) spans 76-86 (GRPKRDLHHGK). Positions 95-104 (HTGEVLHHTD) are enriched in basic and acidic residues. Basic residues predominate over residues 134–145 (HGRHRRDLHHGK). Over residues 181 to 198 (NSSEEKRPKHGQEQGKKH) the composition is skewed to basic and acidic residues.

Expressed in the periphery of the cement gland as well as in the region of the hatching gland.

Its subcellular location is the secreted. The protein is Protein XA-1 of Xenopus laevis (African clawed frog).